We begin with the raw amino-acid sequence, 329 residues long: Thioredoxin-like fold domain-containing protein MRL7L homolog, chloroplastic (329 aa).

The N-terminal 46 residues, 1–46, are a transit peptide targeting the chloroplast; sequence MALQSCCSSSASVPATCSALCLAEATRAASLFVRPRAAARRLVLAR. Residues 58-91 form a disordered region; the sequence is AVQLVLGGRARDDGSESESSDDEDDDEPMQMTDE. Acidic residues predominate over residues 72–85; it reads SESESSDDEDDDEP.

It localises to the plastid. The protein localises to the chloroplast stroma. In terms of biological role, plays an essential role in early steps of chloroplast development. Involved in the regulation of plastid gene expression. Required for the proper function of the plastid transcriptional machinery and protein accumulation in thylakoid membranes. May function as molecular chaperone to ensure proper organization of the nucleoids in chloroplasts. This Oryza sativa subsp. japonica (Rice) protein is Thioredoxin-like fold domain-containing protein MRL7L homolog, chloroplastic.